A 156-amino-acid chain; its full sequence is Ribosomal RNA large subunit methyltransferase H (156 aa).

S-adenosyl-L-methionine contacts are provided by residues Leu-73, Gly-104, and 123–128 (ISSMTL).

This sequence belongs to the RNA methyltransferase RlmH family. Homodimer.

It localises to the cytoplasm. The catalysed reaction is pseudouridine(1915) in 23S rRNA + S-adenosyl-L-methionine = N(3)-methylpseudouridine(1915) in 23S rRNA + S-adenosyl-L-homocysteine + H(+). Its function is as follows. Specifically methylates the pseudouridine at position 1915 (m3Psi1915) in 23S rRNA. This Burkholderia vietnamiensis (strain G4 / LMG 22486) (Burkholderia cepacia (strain R1808)) protein is Ribosomal RNA large subunit methyltransferase H.